Consider the following 1425-residue polypeptide: Protein NAP1 (1425 aa).

Polar residues-rich tracts occupy residues 1 to 20, 1299 to 1312, and 1320 to 1329; these read MANS…PTSV, TPLS…SPSV, and SMKNSTTPQR. Disordered stretches follow at residues 1–24 and 1299–1425; these read MANS…RSRE and TPLS…KQHN. Low complexity predominate over residues 1362–1405; sequence SETGNSRNNENNNNNKQRGSSRRSGPLDYSSSHKGGSGSNSTGP.

It belongs to the HEM-1/HEM-2 family. In terms of assembly, binds PIR. In terms of tissue distribution, expressed in roots, root hairs, hypocotyls, cotyledons, stems, leaves, trichomes, and flowers.

Its function is as follows. Involved in regulation of actin and microtubule organization. Part of a WAVE complex that activates the Arp2/3 complex. In Arabidopsis thaliana (Mouse-ear cress), this protein is Protein NAP1 (NAP1).